The chain runs to 30 residues: Cysteine-rich venom protein hematin (30 aa).

Belongs to the CRISP family. In terms of processing, contains 8 disulfide bonds. As to expression, expressed by the venom gland.

The protein resides in the secreted. Its function is as follows. Inhibits calcium-activated potassium channels (KCa), voltage-gated potassium channel (Kv), and the calcium release channel/ryanodine receptor (RyR). The protein is Cysteine-rich venom protein hematin of Hemachatus haemachatus (Rinkhals).